A 183-amino-acid chain; its full sequence is Peptide deformylase (183 aa).

The Fe cation site is built by Cys110 and His153. Residue Glu154 is part of the active site. His157 is a Fe cation binding site.

It belongs to the polypeptide deformylase family. It depends on Fe(2+) as a cofactor.

The catalysed reaction is N-terminal N-formyl-L-methionyl-[peptide] + H2O = N-terminal L-methionyl-[peptide] + formate. Removes the formyl group from the N-terminal Met of newly synthesized proteins. Requires at least a dipeptide for an efficient rate of reaction. N-terminal L-methionine is a prerequisite for activity but the enzyme has broad specificity at other positions. The protein is Peptide deformylase of Oceanobacillus iheyensis (strain DSM 14371 / CIP 107618 / JCM 11309 / KCTC 3954 / HTE831).